The primary structure comprises 432 residues: MRVVILGSGVVGVTSAWYLSQAGHDVTVIDRESGPAQETSAANAGQISPGYAAPWAAPGVPLKAIKWMFQRHAPLAVRLDGTPFQLKWMWQMLRNCDTRHYMENKGRMVRLAEYSRDCLKTLRAATGIEYEGRQGGTLQLFRTAQQYENATRDIAVLEDAGVPYQLLESSRLAEVEPALAEVAHKLTGGLRLPNDETGDCQLFTQRLARMAEQAGVTFRFNTPVEKLLYENDQIYGVKCADEIIKADAYVMAFGSYSTAMLKGIVDIPVYPLKGYSLTIPIVEPDGAPVSTILDETYKIAITRFDKRIRVGGMAEIVGFNTDLLQPRRETLEMVVRDLFPRGGHIEQATFWTGLRPMTPDGTPVVGRTRYKNLWLNTGHGTLGWTMACGSGQLLSDILSGRTPAIPYDDLSVARYRSDFTPTPPQRLHSAHN.

3 to 17 (VVILGSGVVGVTSAW) is an FAD binding site.

This sequence belongs to the DadA oxidoreductase family. Requires FAD as cofactor.

It carries out the reaction a D-alpha-amino acid + A + H2O = a 2-oxocarboxylate + AH2 + NH4(+). It participates in amino-acid degradation; D-alanine degradation; NH(3) and pyruvate from D-alanine: step 1/1. In terms of biological role, oxidative deamination of D-amino acids. This is D-amino acid dehydrogenase from Salmonella dublin (strain CT_02021853).